The sequence spans 372 residues: General transcription factor IIH subunit 3 (372 aa).

The tract at residues 40 to 78 is disordered; it reads ISGMNDDNDSSSRYNGSTTIGNNNNNNNNNNSNNNNNVN. Polar residues predominate over residues 50 to 60; the sequence is SSRYNGSTTIG. Over residues 61–78 the composition is skewed to low complexity; sequence NNNNNNNNNNSNNNNNVN. Residues 323–340 form a C4-type zinc finger; the sequence is CSVCLSIFCGHSSSCSTC.

It belongs to the TFB4 family. Component of the 7-subunit TFIIH core complex composed of XPB/repB, XPD/repD, gtf2h1, gtf2h2, gtf2h3, gtf2h4 and gtf2h5, which is active in NER. The core complex associates with the 3-subunit CDK-activating kinase (CAK) module composed of cycH/cyclin H, cdk7 and mnat1 to form the 10-subunit holoenzyme (holo-TFIIH) active in transcription.

Its subcellular location is the nucleus. Component of the general transcription and DNA repair factor IIH (TFIIH) core complex, which is involved in general and transcription-coupled nucleotide excision repair (NER) of damaged DNA and, when complexed to CAK, in RNA transcription by RNA polymerase II. In NER, TFIIH acts by opening DNA around the lesion to allow the excision of the damaged oligonucleotide and its replacement by a new DNA fragment. In transcription, TFIIH has an essential role in transcription initiation. When the pre-initiation complex (PIC) has been established, TFIIH is required for promoter opening and promoter escape. Phosphorylation of the C-terminal tail (CTD) of the largest subunit of RNA polymerase II by the kinase module CAK controls the initiation of transcription. The polypeptide is General transcription factor IIH subunit 3 (gtf2h3) (Dictyostelium discoideum (Social amoeba)).